A 223-amino-acid chain; its full sequence is MKSGLLLAVILPVAFAVKKDQQSCNSSCVKVLQKQQESCPSGSDADCLCKLSDSDYWEPLTDCDCINPDKKLSASEIKVQICGAPSSSSTPTSSTETTSSTEAETTEAETTEQPSSSTSSNTESSKTTILETPSIQELNAESTTSVITPLTESAVAAVANTDTSTLIEPQNTEATPEVAPLIQPQLNNGSDLAQVSVQAFENGAGRAAVIGSGSLLALLLNFI.

A signal peptide spans 1-16 (MKSGLLLAVILPVAFA). N25 is a glycosylation site (N-linked (GlcNAc...) asparagine). The interval 83–134 (GAPSSSSTPTSSTETTSSTEAETTEAETTEQPSSSTSSNTESSKTTILETPS) is disordered. Composition is skewed to low complexity over residues 84–103 (APSS…STEA) and 111–128 (TEQP…SKTT). A glycan (N-linked (GlcNAc...) asparagine) is linked at N188. A lipid anchor (GPI-anchor amidated asparagine) is attached at N202. Positions 203–223 (GAGRAAVIGSGSLLALLLNFI) are cleaved as a propeptide — removed in mature form.

It belongs to the IHD1 family. Post-translationally, the GPI-anchor is attached to the protein in the endoplasmic reticulum and serves to target the protein to the cell surface. There, the glucosamine-inositol phospholipid moiety is cleaved off and the GPI-modified mannoprotein is covalently attached via its lipidless GPI glycan remnant to the 1,6-beta-glucan of the outer cell wall layer.

It is found in the secreted. It localises to the cell wall. Its subcellular location is the membrane. Its function is as follows. Probable GPI-anchored cell wall protein that may be involved in cell wall organization, hyphal growth, as well as in virulence. The sequence is that of Probable cell wall protein PGA61 (PGA61) from Candida albicans (strain SC5314 / ATCC MYA-2876) (Yeast).